The sequence spans 223 residues: Putative 3-methyladenine DNA glycosylase (223 aa).

Belongs to the DNA glycosylase MPG family.

In Pseudomonas syringae pv. syringae (strain B728a), this protein is Putative 3-methyladenine DNA glycosylase.